We begin with the raw amino-acid sequence, 1504 residues long: DNA polymerase zeta catalytic subunit (1504 aa).

Positions 1398, 1401, 1414, and 1417 each coordinate Zn(2+). Residues 1398–1417 (CCNCGEELTKICSLQLCDDC) form a CysA-type zinc finger. 4 residues coordinate [4Fe-4S] cluster: cysteine 1446, cysteine 1449, cysteine 1468, and cysteine 1473. Residues 1446–1473 (CRTCSYRYTSDAGIENDHIASKCNSYDC) carry the CysB motif motif.

Belongs to the DNA polymerase type-B family. Forms DNA polymerase zeta with REV7. Requires [4Fe-4S] cluster as cofactor.

The protein localises to the mitochondrion. It localises to the nucleus. It carries out the reaction DNA(n) + a 2'-deoxyribonucleoside 5'-triphosphate = DNA(n+1) + diphosphate. Nonessential DNA polymerase. Required for DNA damage induced mutagenesis. Involved in DNA repair, mitochondrial DNA repair and translesion synthesis. Translesion synthesis in S.cerevisiae may use a specialized DNA polymerase that is not required for other DNA replicative processes. Has a role in the bypass of abasic (AP) sites. Highly inefficient in incorporating nucleotides opposite the AP site, but efficiently extends from nucleotides, particularly an A, inserted opposite the lesion. In Saccharomyces cerevisiae (strain ATCC 204508 / S288c) (Baker's yeast), this protein is DNA polymerase zeta catalytic subunit (REV3).